A 209-amino-acid polypeptide reads, in one-letter code: Uracil phosphoribosyltransferase (209 aa).

5-phospho-alpha-D-ribose 1-diphosphate contacts are provided by residues R79, R104, and 131–139 (DPMLATGGS). Uracil-binding positions include I194 and 199 to 201 (GDA). Position 200 (D200) interacts with 5-phospho-alpha-D-ribose 1-diphosphate.

Belongs to the UPRTase family. The cofactor is Mg(2+).

It carries out the reaction UMP + diphosphate = 5-phospho-alpha-D-ribose 1-diphosphate + uracil. Its pathway is pyrimidine metabolism; UMP biosynthesis via salvage pathway; UMP from uracil: step 1/1. Allosterically activated by GTP. In terms of biological role, catalyzes the conversion of uracil and 5-phospho-alpha-D-ribose 1-diphosphate (PRPP) to UMP and diphosphate. The chain is Uracil phosphoribosyltransferase from Streptococcus pyogenes serotype M49 (strain NZ131).